The chain runs to 542 residues: MSKIVSCEDDRPVRRTLEPIIVTRQGKVARLESSLTPHEAQIEDLIFLRKALNRADIPFLFIRNHKNRPVLAINIKLRPAVERALVTACASEPMYAKTIDERGLSPVLVAKGQLSQSIDPRIVRLYRRRIAPGGFRFGSRFGVELQFWSFEETLIRCPVENSLTRKVLPRKEVTPATIKLYGYKWHTIEGMFTPHASDVTFDIDLVFSWVDGSDPEFRARRAAEMSHHVVGEGDDADARIRQIDELKYALRSVNMFAPWIRRIFIATDSIPPSWLADHPMITIVPAEDHFSDRSALPTYNSHAVESQLHRIPDLSEHFLYSNDDMFFGRPLKASMFFSPGGVTRFIEAKTRIGLGTNDPTRSGFENAARVNRQLLLRRFGQLITRHLEHTTVPLRKSVLFEMEQEFPEEFARTQESVFRSGTDISVTNSLYHYYALITGRAVQQEKAKVLYVDTTSYTGLNLLPELRKRRNYDFFCLNDGSFPEVPATERAERVVSFLERYFPIPAPWEKVATDFNRQDFASPTVSAPLEDGQTANPAQTAR.

The segment at 522–542 (SPTVSAPLEDGQTANPAQTAR) is disordered. Residues 533 to 542 (QTANPAQTAR) are compositionally biased toward polar residues.

Belongs to the stealth family.

This Mycobacterium leprae (strain TN) protein is Exopolysaccharide phosphotransferase CpsY (cpsY).